A 232-amino-acid polypeptide reads, in one-letter code: Orotate phosphoribosyltransferase (232 aa).

5-phospho-alpha-D-ribose 1-diphosphate is bound by residues arginine 107, lysine 108, lysine 111, and 133 to 141; that span reads EDLTTDGGS. Threonine 137 serves as a coordination point for orotate.

Belongs to the purine/pyrimidine phosphoribosyltransferase family. PyrE subfamily. Homodimer. The cofactor is Mg(2+).

It carries out the reaction orotidine 5'-phosphate + diphosphate = orotate + 5-phospho-alpha-D-ribose 1-diphosphate. Its pathway is pyrimidine metabolism; UMP biosynthesis via de novo pathway; UMP from orotate: step 1/2. Its function is as follows. Catalyzes the transfer of a ribosyl phosphate group from 5-phosphoribose 1-diphosphate to orotate, leading to the formation of orotidine monophosphate (OMP). This chain is Orotate phosphoribosyltransferase, found in Cereibacter sphaeroides (strain ATCC 17025 / ATH 2.4.3) (Rhodobacter sphaeroides).